The following is a 206-amino-acid chain: Large ribosomal subunit protein uL4 (206 aa).

Residues Asn-43–Ser-78 are disordered. A compositionally biased stretch (basic and acidic residues) spans Gly-47–Gly-59. Residues Gly-60–Gly-71 show a composition bias toward basic residues.

It belongs to the universal ribosomal protein uL4 family. As to quaternary structure, part of the 50S ribosomal subunit.

Functionally, one of the primary rRNA binding proteins, this protein initially binds near the 5'-end of the 23S rRNA. It is important during the early stages of 50S assembly. It makes multiple contacts with different domains of the 23S rRNA in the assembled 50S subunit and ribosome. Its function is as follows. Forms part of the polypeptide exit tunnel. This chain is Large ribosomal subunit protein uL4, found in Desulforamulus reducens (strain ATCC BAA-1160 / DSM 100696 / MI-1) (Desulfotomaculum reducens).